Reading from the N-terminus, the 1413-residue chain is MKALLDLFKQVQQEEVFDAIKIGLASPDKIRSWSFGEVKKPETINYRTFKPERDGLFCAKIFGPIKDYECLCGKYKRLKHRGVICEKCGVEVTLAKVRRERMGHIELASPVAHIWFLKSLPSRLGMVLDMTLRDIERVLYFEAYVVIEPGMTPLKARQIMTEEDYYNKVEEYGDEFRAEMGAEGVRELLRAINIDEQVETLRTELKNTGSEAKIKKYAKRLKVLEAFQRSGIKPEWMILEVLPVLPPELRPLVPLDGGRFATSDLNDLYRRVINRNNRLKRLLELKAPEIIVRNEKRMLQEAVDSLLDNGRRGKAMTGANKRPLKSLADMIKGKGGRFRQNLLGKRVDYSGRSVIVVGPTLKLHQCGLPKLMALELFKPFIFNKLEVMGVATTIKAAKKEVENQTPVVWDILEEVIREHPVMLNRAPTLHRLGIQAFEPVLIEGKAIQLHPLVCAAFNADFDGDQMAVHVPLSLEAQMEARTLMLASNNVLFPANGDPSIVPSQDIVLGLYYATREAVNGKGEGLSFTGVSEVIRAYENKEVELASRVNVRITEMVHNEDKSEGAPPFVPKITLYATTVGRAILSEILPHGLPFSVLNKPLKKKEISRLINTAFRKCGLRATVVFADQLMQSGFRLATRAGISICVDDMLVPPQKETIVGDAAKKVKEYDRQYMSGLVTAQERYNNVVDIWSATSEAVGKAMMEQLSTEPVTDRDGNETRQESFNSIYMMADSGARGSAVQIRQLAGMRGLMAKPDGSIIETPITANFREGLNVLQYFISTHGARKGLADTALKTANSGYLTRRLVDVTQDLVVVEDDCGTSNGVAMKALVEGGEVVEALRDRILGRVAVADVVNPETQETLYESGTLLDETAVEEIERLGIDEVRVRTPLTCETRYGLCAACYGRDLGRGSLVNVGEAVGVIAAQSIGEPGTQLTMRTFHIGGAASRAAVASSVEAKSNGIVRFTATMRYVTNAKGEQIVISRSGEAMITDDFGRERERHKVPYGATLLQLDGATIKAGTQLATWDPLTRPIITEYGGTVKFENVEEGVTVAKQIDDVTGLSTLVVIDVKRRGSQASKSVRPQVKLLDANGEEVKIPGTEHAVQIGFQVGALITVKDGQQVQVGEVLARIPTEAQKTRDITGGLPRVAELFEARSPKDAGILAEVTGTTSFGKDTKGKQRLVITDLEGNQHEFLIAKEKQVLVHDAQVVNKGEMIVDGPADPHDILRLQGIEALSRYIVDEVQDVYRLQGVKINDKHIEVIVRQMLRRVQITDNGDTRFIPGEQVERSDMLDENDRMIAEGKRPASYDNVLLGITKASLSTDSFISAASFQETTRVLTEAAIMGKRDDLRGLKENVIVGRLIPAGTGLAFHKARKAKESSDRERFDQIAAEEAFDFGTPSAPAEEPQHPAAE.

Zn(2+) is bound by residues Cys-70, Cys-72, Cys-85, and Cys-88. Mg(2+) contacts are provided by Asp-460, Asp-462, and Asp-464. Residues Cys-819, Cys-893, Cys-900, and Cys-903 each contribute to the Zn(2+) site. Residues 1392–1413 (EEAFDFGTPSAPAEEPQHPAAE) are disordered.

Belongs to the RNA polymerase beta' chain family. In terms of assembly, the RNAP catalytic core consists of 2 alpha, 1 beta, 1 beta' and 1 omega subunit. When a sigma factor is associated with the core the holoenzyme is formed, which can initiate transcription. The cofactor is Mg(2+). Requires Zn(2+) as cofactor.

The catalysed reaction is RNA(n) + a ribonucleoside 5'-triphosphate = RNA(n+1) + diphosphate. Its function is as follows. DNA-dependent RNA polymerase catalyzes the transcription of DNA into RNA using the four ribonucleoside triphosphates as substrates. The polypeptide is DNA-directed RNA polymerase subunit beta' (Burkholderia orbicola (strain MC0-3)).